An 827-amino-acid polypeptide reads, in one-letter code: Multiphosphoryl transfer protein (827 aa).

Positions 2–142 (IPLTSELVAI…AVIVARLTGA (141 aa)) constitute a PTS EIIA type-2 domain. Catalysis depends on histidine 62, which acts as the Tele-phosphohistidine intermediate; for EIIA activity. Histidine 62 carries the post-translational modification Phosphohistidine; by HPr. Residues 157–245 (AQGIDVVVTG…AFEAGLEDEE (89 aa)) enclose the HPr domain. Histidine 171 functions as the Pros-phosphohistidine intermediate; for HPr activity in the catalytic mechanism. Histidine 171 is subject to Phosphohistidine; by EI. The tract at residues 270–827 (EGRTLVGISS…TTAAEVRGLK (558 aa)) is PTS EI. Histidine 457 acts as the Tele-phosphohistidine intermediate; for PTS EI activity in catalysis. Histidine 457 bears the Phosphohistidine; by autocatalysis mark. Phosphoenolpyruvate-binding residues include arginine 564 and arginine 600. 2 residues coordinate Mg(2+): glutamate 693 and aspartate 717. Residues 716 to 717 (ND) and arginine 727 contribute to the phosphoenolpyruvate site. The Proton donor role is filled by cysteine 764.

The protein belongs to the PEP-utilizing enzyme family. The cofactor is Mg(2+).

It is found in the cytoplasm. The catalysed reaction is L-histidyl-[protein] + phosphoenolpyruvate = N(pros)-phospho-L-histidyl-[protein] + pyruvate. Its function is as follows. The phosphoenolpyruvate-dependent sugar phosphotransferase system (sugar PTS), a major carbohydrate active transport system, catalyzes the phosphorylation of incoming sugar substrates concomitantly with their translocation across the cell membrane. The enzyme II FruAB PTS system is involved in fructose transport. The sequence is that of Multiphosphoryl transfer protein from Rhodobacter capsulatus (Rhodopseudomonas capsulata).